A 335-amino-acid chain; its full sequence is Glyceraldehyde-3-phosphate dehydrogenase 2 (335 aa).

Residues 13-14 (TI) and G111 contribute to the NAD(+) site. Position 140–142 (140–142 (SCN)) interacts with D-glyceraldehyde 3-phosphate. C141 acts as the Nucleophile in catalysis. R169 lines the NAD(+) pocket. Residues T171 and 195-196 (HG) contribute to the D-glyceraldehyde 3-phosphate site. Position 300 (Q300) interacts with NAD(+).

This sequence belongs to the glyceraldehyde-3-phosphate dehydrogenase family. Homotetramer.

Its subcellular location is the cytoplasm. It carries out the reaction D-glyceraldehyde 3-phosphate + phosphate + NADP(+) = (2R)-3-phospho-glyceroyl phosphate + NADPH + H(+). The catalysed reaction is D-glyceraldehyde 3-phosphate + phosphate + NAD(+) = (2R)-3-phospho-glyceroyl phosphate + NADH + H(+). It functions in the pathway carbohydrate degradation; glycolysis; pyruvate from D-glyceraldehyde 3-phosphate: step 1/5. In Methanosarcina acetivorans (strain ATCC 35395 / DSM 2834 / JCM 12185 / C2A), this protein is Glyceraldehyde-3-phosphate dehydrogenase 2 (gapB).